An 89-amino-acid polypeptide reads, in one-letter code: Large ribosomal subunit protein bL27 (89 aa).

A disordered region spans residues 1–22 (MAHKKAGGSSRNGRDSESKRLG).

It belongs to the bacterial ribosomal protein bL27 family.

This Rhizobium etli (strain CIAT 652) protein is Large ribosomal subunit protein bL27.